A 432-amino-acid chain; its full sequence is MSATESCAKNVQYRVDHLLSAVENELQAGSEKGDPTEKELKVSLEERDLWTRFKELTNEMIVTKNGRRMFPVLKVSMSGLDPNAMYTVLLDFVAADNHRWKYVNGEWVPGGKPEPQAPSCVYIHPDSPNFGAHWMKDPVSFSKVKLTNKMNGGGQIMLNSLHKYEPRIHIVRVGGTQRMITSHSFPETQFIAVTAYQNEEITALKIKHNPFAKAFLDAKERNDYKDILDEGIDSQHSNFSQLGTWLIPNGGSLCSPNPHTQFGAPLSLSSPHGCERYSSLRNHRSAPYPSPYTHRNNSPNNLADNSSACLSMLQSHDNWSTLQMPAHTGMLPMSHSTGTPPPSSQYPSLWSVSNSAITPVSQSGGITNGISSQYLLGSTPHYSSLSHAVPSPSTGSPLYEHGAQTEIAENQYDVTAHSRLSSTWTPVAPPSV.

The T-box DNA-binding region spans 49 to 217; that stretch reads LWTRFKELTN…HNPFAKAFLD (169 aa). Residues 274 to 306 are disordered; that stretch reads CERYSSLRNHRSAPYPSPYTHRNNSPNNLADNS. The span at 293-306 shows a compositional bias: polar residues; it reads THRNNSPNNLADNS.

In terms of assembly, when not bound to DNA, exists as a monomer. Binds DNA as a dimer. In terms of tissue distribution, expressed in presumptive mesodermal cells around the blastopore, and then in the notochord.

The protein localises to the nucleus. Its function is as follows. Involved in the transcriptional regulation of genes required for mesoderm formation and differentiation. Binds to the palindromic T site 5'-TTCACACCTAGGTGTGAA-3' DNA sequence. Causes dorsal mesodermal differentiation of animal cap ectoderm when co-expressed with wnt8 and noggin. None of these molecules causes dorsal mesoderm formation when expressed alone. Establishes the left/right axis at early gastrula stage by directly up-regulating mesodermal expression of zic3. This Xenopus laevis (African clawed frog) protein is T-box transcription factor T.